The sequence spans 387 residues: GTP-binding protein 10 (387 aa).

The region spanning Gly13 to Ile148 is the Obg domain. In terms of domain architecture, OBG-type G spans Ala149–Asp344. GTP contacts are provided by residues Gly155 to Ser162, Asp202 to Leu206, and Asn278 to Asp281.

The protein belongs to the TRAFAC class OBG-HflX-like GTPase superfamily. OBG GTPase family.

The protein resides in the nucleus. It is found in the nucleolus. It localises to the chromosome. In terms of biological role, may be involved in the ribosome maturation process. Complements an ObgE(CgtA) function in E.coli ribosome maturation. Plays a role of GTPase in vitro. When missing, disorganization of the nucleolar architecture is observed. The polypeptide is GTP-binding protein 10 (GTPBP10) (Homo sapiens (Human)).